A 174-amino-acid chain; its full sequence is Interferon gamma (174 aa).

The first 23 residues, 1–23, serve as a signal peptide directing secretion; that stretch reads MNSTRCILALLLCLTQAMSGCYG. Pyrrolidone carboxylic acid is present on Q24. N-linked (GlcNAc...) asparagine glycosylation is found at N39 and N106.

Belongs to the type II (or gamma) interferon family. Homodimer. Interacts with IFNGR1 (via extracellular domain); this interaction promotes IFNGR1 dimerization. Released primarily from activated T lymphocytes.

The protein resides in the secreted. Functionally, type II interferon produced by immune cells such as T-cells and NK cells that plays crucial roles in antimicrobial, antiviral, and antitumor responses by activating effector immune cells and enhancing antigen presentation. Primarily signals through the JAK-STAT pathway after interaction with its receptor IFNGR1 to affect gene regulation. Upon IFNG binding, IFNGR1 intracellular domain opens out to allow association of downstream signaling components JAK2, JAK1 and STAT1, leading to STAT1 activation, nuclear translocation and transcription of IFNG-regulated genes. Many of the induced genes are transcription factors such as IRF1 that are able to further drive regulation of a next wave of transcription. Plays a role in class I antigen presentation pathway by inducing a replacement of catalytic proteasome subunits with immunoproteasome subunits. In turn, increases the quantity, quality, and repertoire of peptides for class I MHC loading. Increases the efficiency of peptide generation also by inducing the expression of activator PA28 that associates with the proteasome and alters its proteolytic cleavage preference. Up-regulates as well MHC II complexes on the cell surface by promoting expression of several key molecules such as cathepsins B/CTSB, H/CTSH, and L/CTSL. Participates in the regulation of hematopoietic stem cells during development and under homeostatic conditions by affecting their development, quiescence, and differentiation. The protein is Interferon gamma (IFNG) of Phodopus sungorus (Striped hairy-footed hamster).